A 349-amino-acid chain; its full sequence is uncharacterized protein (349 aa).

This is an uncharacterized protein from Ostreid herpesvirus 1 (isolate France) (OsHV-1).